Here is a 265-residue protein sequence, read N- to C-terminus: Mlc titration factor A (265 aa).

Zn(2+) contacts are provided by His111, His148, His152, and Glu211.

This sequence belongs to the MtfA family. As to quaternary structure, interacts with Mlc. Requires Zn(2+) as cofactor.

The protein resides in the cytoplasm. Functionally, involved in the modulation of the activity of the glucose-phosphotransferase system (glucose-PTS). Interacts with the transcriptional repressor Mlc, preventing its interaction with DNA and leading to the modulation of expression of genes regulated by Mlc, including ptsG, which encodes the PTS system glucose-specific EIICB component. In terms of biological role, shows zinc-dependent metallopeptidase activity. The chain is Mlc titration factor A from Salmonella typhi.